Here is a 210-residue protein sequence, read N- to C-terminus: DNA-directed RNA polymerases I, II, and III subunit RPABC1 (210 aa).

Met-1 is modified (N-acetylmethionine). Residue Lys-81 forms a Glycyl lysine isopeptide (Lys-Gly) (interchain with G-Cter in SUMO2) linkage.

The protein belongs to the archaeal Rpo5/eukaryotic RPB5 RNA polymerase subunit family. In terms of assembly, component of the RNA polymerase I (Pol I), RNA polymerase II (Pol II) and RNA polymerase III (Pol III) complexes consisting of at least 13, 12 and 17 subunits, respectively. Pol I complex consists of a ten-subunit catalytic core composed of POLR1A/RPA1, POLR1B/RPA2, POLR1C/RPAC1, POLR1D/RPAC2, POLR1H/RPA12, POLR2E/RPABC1, POLR2F/RPABC2, POLR2H/RPABC3, POLR2K/RPABC4 and POLR2L/RPABC5; a mobile stalk subunit POLR1F/RPA43 protruding from the core and additional subunits homologous to general transcription factors POLR1E/RPA49 and POLR1G/RPA34. Part of Pol I pre-initiation complex (PIC), in which Pol I core assembles with RRN3 and promoter-bound UTBF and SL1/TIF-IB complex. Pol II complex contains a ten-subunit catalytic core composed of POLR2A/RPB1, POLR2B/RPB2, POLR2C/RPB3, POLR2I/RPB9, POLR2J/RPB11, POLR2E/RPABC1, POLR2F/RPABC2, POLR2H/RPABC3, POLR2K/RPABC4 and POLR2L/RPABC5 and a mobile stalk composed of two subunits POLR2D/RPB4 and POLR2G/RPB7. Part of Pol II(G) complex, in which Pol II core associates with an additional subunit POLR2M; unlike conventional Pol II, Pol II(G) functions as a transcriptional repressor. Part of TBP-based Pol II pre-initiation complex (PIC), in which Pol II core assembles with general transcription factors and other specific initiation factors including GTF2E1, GTF2E2, GTF2F1, GTF2F2, TCEA1, ERCC2, ERCC3, GTF2H2, GTF2H3, GTF2H4, GTF2H5, GTF2A1, GTF2A2, GTF2B and TBP; this large multi-subunit PIC complex mediates DNA unwinding and targets Pol II core to the transcription start site where the first phosphodiester bond forms. In Pol II complex, this subunit is present in 2-fold molar excess over the other subunits. Pol III complex consists of a ten-subunit catalytic core composed of POLR3A/RPC1, POLR3B/RPC2, POLR1C/RPAC1, POLR1D/RPAC2, POLR3K/RPC10, POLR2E/RPABC1, POLR2F/RPABC2, POLR2H/RPABC3, POLR2K/RPABC4 and POLR2L/RPABC5; a mobile stalk composed of two subunits POLR3H/RPC8 and CRCP/RPC9, protruding from the core and functioning primarily in transcription initiation; and additional subunits homologous to general transcription factors of the RNA polymerase II machinery, POLR3C/RPC3-POLR3F/RPC6-POLR3G/RPC7 heterotrimer required for transcription initiation and POLR3D/RPC4-POLR3E/RPC5 heterodimer involved in both transcription initiation and termination. Component of the PAQosome complex which is responsible for the biogenesis of several protein complexes and which consists of R2TP complex members RUVBL1, RUVBL2, RPAP3 and PIH1D1, URI complex members PFDN2, PFDN6, PDRG1, UXT and URI1 as well as ASDURF, POLR2E and DNAAF10/WDR92. Interacts with URI1.

It localises to the nucleus. The protein resides in the nucleolus. DNA-dependent RNA polymerase catalyzes the transcription of DNA into RNA using the four ribonucleoside triphosphates as substrates. Common component of RNA polymerases I, II and III which synthesize ribosomal RNA precursors, mRNA precursors and many functional non-coding RNAs, and small RNAs, such as 5S rRNA and tRNAs, respectively. Pol II is the central component of the basal RNA polymerase II transcription machinery. Pols are composed of mobile elements that move relative to each other. In Pol II, POLR2E/RPABC1 is part of the lower jaw surrounding the central large cleft and thought to grab the incoming DNA template. Seems to be the major component in this process. The protein is DNA-directed RNA polymerases I, II, and III subunit RPABC1 of Mus musculus (Mouse).